A 1101-amino-acid chain; its full sequence is Translation initiation factor IF-2 (1101 aa).

2 disordered regions span residues 81–437 (QEIL…EDDF) and 452–509 (SIST…QRAE). Positions 93–108 (PFSSTDAPVGSGQSSP) are enriched in polar residues. Residues 110-124 (IEPPRPPMKPQPPSP) are compositionally biased toward pro residues. Polar residues-rich tracts occupy residues 128 to 149 (EVTSPITDEPVSTQEDTNGSSS) and 157 to 184 (SPMSPFDQQQPEQNTTDHNQEQQNQLKY). A compositionally biased stretch (low complexity) spans 185–196 (NQEQSNQLEQES). Residues 197–206 (AISSELSEVN) show a composition bias toward polar residues. 3 stretches are compositionally biased toward basic and acidic residues: residues 228-237 (SKEKEAKSNE), 248-288 (KENK…DKKS), and 295-340 (VKRE…ELKR). Acidic residues predominate over residues 361-378 (EPEDVEDTAEDLLEEDPL). Basic residues-rich tracts occupy residues 385–397 (PKLKRPTPPKVGK) and 414–428 (KAGKAAKAGKNKRRQ). The segment covering 484–506 (EPGRGKSAERERSERKDRKEQPQ) has biased composition (basic and acidic residues). The 174-residue stretch at 592–765 (RRPPVVTIMG…LLVAEVGELS (174 aa)) folds into the tr-type G domain. The G1 stretch occupies residues 601 to 608 (GHVDHGKT). Residue 601–608 (GHVDHGKT) participates in GTP binding. Residues 626 to 630 (GITQH) are G2. Positions 651-654 (DTPG) are G3. Residues 651-655 (DTPGH) and 705-708 (NKID) contribute to the GTP site. Residues 705–708 (NKID) form a G4 region. The G5 stretch occupies residues 741–743 (SAL).

It belongs to the TRAFAC class translation factor GTPase superfamily. Classic translation factor GTPase family. IF-2 subfamily.

It localises to the cytoplasm. Functionally, one of the essential components for the initiation of protein synthesis. Protects formylmethionyl-tRNA from spontaneous hydrolysis and promotes its binding to the 30S ribosomal subunits. Also involved in the hydrolysis of GTP during the formation of the 70S ribosomal complex. The chain is Translation initiation factor IF-2 from Gloeothece citriformis (strain PCC 7424) (Cyanothece sp. (strain PCC 7424)).